The following is a 343-amino-acid chain: General stress protein 30 (343 aa).

This sequence belongs to the polysaccharide pyruvyl transferase family.

The protein is General stress protein 30 (yxaB) of Bacillus subtilis (strain 168).